The primary structure comprises 140 residues: Ribosome-binding factor A (140 aa).

The tract at residues 115–140 (EDERQQRGDIPPGSDQQPGSDEQPTG) is disordered. The span at 128–140 (SDQQPGSDEQPTG) shows a compositional bias: polar residues.

Belongs to the RbfA family. As to quaternary structure, monomer. Binds 30S ribosomal subunits, but not 50S ribosomal subunits or 70S ribosomes.

It localises to the cytoplasm. In terms of biological role, one of several proteins that assist in the late maturation steps of the functional core of the 30S ribosomal subunit. Associates with free 30S ribosomal subunits (but not with 30S subunits that are part of 70S ribosomes or polysomes). Required for efficient processing of 16S rRNA. May interact with the 5'-terminal helix region of 16S rRNA. The protein is Ribosome-binding factor A of Synechococcus sp. (strain CC9605).